We begin with the raw amino-acid sequence, 350 residues long: UDP-glucose 4-epimerase GEPI48 (350 aa).

Residue 5–36 coordinates NAD(+); that stretch reads TVLVTGGAGYIGSHTVLQLLLGGFKAVVVDNL. Ser-130 is a substrate binding site. Tyr-154 (proton acceptor) is an active-site residue.

This sequence belongs to the NAD(P)-dependent epimerase/dehydratase family. NAD(+) is required as a cofactor.

The catalysed reaction is UDP-alpha-D-glucose = UDP-alpha-D-galactose. Its pathway is carbohydrate metabolism; galactose metabolism. The chain is UDP-glucose 4-epimerase GEPI48 from Cyamopsis tetragonoloba (Guar).